Here is a 1078-residue protein sequence, read N- to C-terminus: Extracellular calcium-sensing receptor (1078 aa).

The N-terminal stretch at Met1–Ala19 is a signal peptide. Residues Tyr20 to Glu610 lie on the Extracellular side of the membrane. A ligand-binding 1 (LB1) region spans residues Pro22–Pro188. The cysteines at positions 60 and 101 are disulfide-linked. Residue Arg66 to Trp70 participates in phosphate binding. Residues Ile81, Ser84, Leu87, and Leu88 each coordinate Ca(2+). An N-linked (GlcNAc...) asparagine glycan is attached at Asn90. Residue Thr100 coordinates Ca(2+). Asn130 is a glycosylation site (N-linked (GlcNAc...) asparagine). Thr145 provides a ligand contact to Ca(2+). L-tryptophan-binding residues include Ser147, Ala168, and Ser170. Ca(2+) is bound by residues Ser170, Pro188, Asp190, Glu231, and Asp234. The ligand-binding 2 (LB2) stretch occupies residues Asn189–Ala324. Intrachain disulfides connect Cys236–Cys561, Cys358–Cys395, Cys437–Cys449, Cys542–Cys562, Cys546–Cys565, Cys568–Cys582, and Cys585–Cys598. 2 residues coordinate spermine: Asp238 and Ser240. N-linked (GlcNAc...) asparagine glycans are attached at residues Asn261 and Asn287. Glu297 lines the Ca(2+) pocket. Glu297 contributes to the L-tryptophan binding site. N-linked (GlcNAc...) asparagine glycans are attached at residues Asn386 and Asn400. A phosphate-binding site is contributed by Arg415 to Ser417. 3 N-linked (GlcNAc...) asparagine glycosylation sites follow: Asn446, Asn468, and Asn488. Tyr489 is a binding site for Ca(2+). An N-linked (GlcNAc...) asparagine glycan is attached at Asn541. The cysteine-rich (CR) stretch occupies residues Cys542–Phe612. Residue Gly557 coordinates Ca(2+). The N-linked (GlcNAc...) asparagine glycan is linked to Asn594. Residues Pro611 to Lys636 traverse the membrane as a helical segment. Topologically, residues Phe637–Arg648 are cytoplasmic. The tract at residues Phe637–Arg648 is intracellular loop 1 (ICL1). The chain crosses the membrane as a helical span at residues Glu649–Phe668. At Ile669–Asp674 the chain is on the extracellular side. The chain crosses the membrane as a helical span at residues Trp675–Lys698. The Cytoplasmic segment spans residues Thr699–Asn722. Positions Thr699–Asn722 are intracellular loop 2 (ICL2). A helical membrane pass occupies residues Leu723 to Thr745. The Extracellular portion of the chain corresponds to Ala746 to Ser769. Residues Leu770–Phe789 traverse the membrane as a helical segment. At Phe790–Lys805 the chain is on the cytoplasmic side. Residues Phe790–Lys805 are intracellular loop 3 (ICL3). Residues Phe806 to Thr828 form a helical membrane-spanning segment. The Extracellular segment spans residues Tyr829 to Phe832. Residues Val833–Phe854 traverse the membrane as a helical segment. Topologically, residues Asn855–Ser1078 are cytoplasmic. Positions Asn855–Ser1078 are C-terminus. Residues Ala880 to Ser900 are interaction with RNF19A. Residue Thr888 is modified to Phosphothreonine; by PKC. The segment at Arg890–Arg898 is arginine-rich retention motif. Position 892 is a phosphoserine; by PKC (Ser892). Disordered regions lie at residues Ser892 to Lys963, Ala986 to Thr1006, and Thr1030 to Val1055. Ser899 is modified (phosphoserine; by PKA). Positions Ser900 to Ser918 are enriched in low complexity. Ser920 carries the post-translational modification Phosphoserine. Over residues Gln932–Pro960 the composition is skewed to low complexity. Over residues Thr993–Thr1006 the composition is skewed to polar residues. The residue at position 1061 (Ser1061) is a Phosphoserine.

The protein belongs to the G-protein coupled receptor 3 family. Homodimer; disulfide-linked. Interacts with VCP. Interacts with ARRB1. In terms of processing, phosphorylation at Thr-888 by PKC impairs coupling with G(q)/G(11) G-proteins, while it does not affect G(i)/G(o)-coupling. Phosphorylation at Ser-892 by PKC and Ser-899 by PKA promote plasma membrane localization. Post-translationally, ubiquitinated by RNF19A; which induces proteasomal degradation. N-glycosylated. As to expression, expressed in the temporal lobe, frontal lobe, parietal lobe, hippocampus, and cerebellum. Also found in kidney, lung, liver, heart, skeletal muscle, placenta.

It localises to the cell membrane. With respect to regulation, in resting state, adopts an open conformation, anion-binding promoting the inactive configuration. Upon aromatic amino acid-binding, the groove in the extracellular venus flytrap module is closed, thereby inducing the formation of a novel homodimer interface between subunits. Calcium ions stabilize the active state by enhancing homodimer interactions between membrane-proximal domains to fully activate the receptor. Upon activation, the homodimer adopts an asymmetric configuration of the 7-transmembrane region that primes one protomer for G-protein coupling. G-protein binding expands the transmembrane dimer interface; the restriction imposed by the receptor dimer, in combination with intracellular loop 2 (ICL2), enables G-protein activation by facilitating conformational transition of G-protein alpha. Coupling to different classes of G-proteins results in distinct CASR-G-protein interfaces. Activated by glucose, which acts as a positive allosteric modulator. Activated by positive allosteric modulator drugs cinacalcet, evocalcet and etelcalcetide, which are clinically used for the treatment of hyperparathyroidism and familial hypocalciuric hypercalcemia. Inhibited by NPS-2143, a negative allosteric modulator tested for the treatment of hypocalcemia. Activated by velcalcetide (AMG 416), a D-amino acid-containing peptide agonist that is being evaluated for the treatment of secondary hyperparathyroidism in chronic kidney disease patients receiving hemodialysis. Velcalcetide agonist acts by forming a disulfide bond with Cys-482. Its function is as follows. G-protein-coupled receptor that senses changes in the extracellular concentration of calcium ions and plays a key role in maintaining calcium homeostasis. Senses fluctuations in the circulating calcium concentration: activated by elevated circulating calcium, leading to decreased parathyroid hormone (PTH) secretion in parathyroid glands. In kidneys, acts as a key regulator of renal tubular calcium resorption. Ligand binding causes a conformation change that triggers signaling via guanine nucleotide-binding proteins (G-proteins) and modulates the activity of downstream effectors. CASR is coupled with different G(q)/G(11), G(i)/G(o)- or G(s)-classes of G-proteins depending on the context. In the parathyroid and kidney, CASR signals through G(q)/G(11) and G(i)/G(o) G-proteins: G(q)/G(11) coupling activates phospholipase C-beta, releasing diacylglycerol (DAG) and inositol 1,4,5-trisphosphate (IP3) second messengers, while G(i)/G(o) coupling mediates inhibition of adenylate cyclase activity. The G-protein-coupled receptor activity is activated by a co-agonist mechanism: aromatic amino acids, such as Trp or Phe, act concertedly with divalent cations, such as calcium or magnesium, to achieve full receptor activation. Acts as an activator of the NLRP3 inflammasome via G(i)/G(o)-mediated signaling: down-regulation of cyclic AMP (cAMP) relieving NLRP3 inhibition by cAMP. Acts as a regulator of proton-sensing receptor GPR68 in a seesaw manner: CASR-mediated signaling inhibits GPR68 signaling in response to extracellular calcium, while GPR68 inhibits CASR in presence of extracellular protons. The protein is Extracellular calcium-sensing receptor of Homo sapiens (Human).